The sequence spans 233 residues: Large ribosomal subunit protein uL1 (233 aa).

The protein belongs to the universal ribosomal protein uL1 family. As to quaternary structure, part of the 50S ribosomal subunit.

Its function is as follows. Binds directly to 23S rRNA. The L1 stalk is quite mobile in the ribosome, and is involved in E site tRNA release. In terms of biological role, protein L1 is also a translational repressor protein, it controls the translation of the L11 operon by binding to its mRNA. In Rhizobium johnstonii (strain DSM 114642 / LMG 32736 / 3841) (Rhizobium leguminosarum bv. viciae), this protein is Large ribosomal subunit protein uL1.